The sequence spans 128 residues: Probable soluble cytochrome b562 2 (128 aa).

The N-terminal stretch at 1–22 (MGKTLMALITAALLSTSSLVMA) is a signal peptide. 2 residues coordinate heme b: M29 and H124.

Belongs to the cytochrome b562 family. Heme b is required as a cofactor.

Its subcellular location is the periplasm. Electron-transport protein of unknown function. In Yersinia pestis, this protein is Probable soluble cytochrome b562 2 (cybC2).